Reading from the N-terminus, the 136-residue chain is MLAPKKQKFRKAHKGRVASTAKAGTTLAFGSFGLKSIDGWRVTARQIEAGRKAATRCMKRQGRLWIRIFPDVPVSKKPAEVRMGKGKGSPEFFAVRVSPGRIMFEIEGVEENVALRALELASAKLPVRTRIVRRYE.

The protein belongs to the universal ribosomal protein uL16 family. In terms of assembly, part of the 50S ribosomal subunit.

Its function is as follows. Binds 23S rRNA and is also seen to make contacts with the A and possibly P site tRNAs. This is Large ribosomal subunit protein uL16 from Rickettsia peacockii (strain Rustic).